We begin with the raw amino-acid sequence, 577 residues long: Moesin (577 aa).

Residues 2-295 enclose the FERM domain; sequence PKTISVRVTT…GNHELYMRRR (294 aa). At serine 74 the chain carries Phosphoserine. Lysine 79 is subject to N6-acetyllysine. The residue at position 83 (lysine 83) is an N6-succinyllysine. Positions 115-120 match the [IL]-x-C-x-x-[DE] motif motif; sequence IYCPPE. Phosphotyrosine is present on tyrosine 116. At cysteine 117 the chain carries S-nitrosocysteine. Lysine 139 and lysine 165 each carry N6-acetyllysine. 3 disordered regions span residues 322-342, 358-419, and 468-518; these read LLENEKKKRELAEKEKEKIER, TKKA…QLAS, and STPH…NERV. Residues 358–401 are compositionally biased toward basic and acidic residues; the sequence is TKKAQQELEEQTRRALELEQERKRAQSEAEKLAKERQEAEEAKE. Position 407 is a phosphoserine (serine 407). The segment covering 492–518 has biased composition (basic and acidic residues); sequence AELRADAMAKDRSEEERTTEAEKNERV. Serine 527 bears the Phosphoserine mark. Threonine 558 carries the phosphothreonine; by ROCK2 and STK10 modification.

As to quaternary structure, in resting T-cells, part of a PAG1-NHERF1-MSN complex which is disrupted upon TCR activation. Interacts with NHERF1. Interacts with PPP1R16B. Interacts with SELPLG and SYK; these interactions mediate the activation of SYK by SELPLG. Interacts with PDPN (via cytoplasmic domain); this interaction activates RHOA and promotes epithelial-mesenchymal transition. Interacts with SPN/CD43 cytoplasmic tail. Interacts with CD44. Interacts with ICAM2. Interacts with ICAM3 (via C-terminus). Interacts with PDZD8. Interacts with F-actin. Interacts with CD46. Interacts with PTPN6. In terms of processing, phosphorylation on Thr-558 by STK10 negatively regulates lymphocyte migration and polarization. Phosphorylation on Thr-558 is crucial for the formation of microvilli-like structures. Phosphorylation by ROCK2 suppresses the head-to-tail association of the N-terminal and C-terminal halves resulting in an opened conformation which is capable of actin and membrane-binding. Post-translationally, S-nitrosylation of Cys-117 is induced by interferon-gamma and oxidatively-modified low-densitity lipoprotein (LDL(ox)) implicating the iNOS-S100A8/9 transnitrosylase complex.

Its subcellular location is the cell membrane. The protein localises to the cytoplasm. The protein resides in the cytoskeleton. It localises to the apical cell membrane. It is found in the cell projection. Its subcellular location is the microvillus membrane. The protein localises to the microvillus. Ezrin-radixin-moesin (ERM) family protein that connects the actin cytoskeleton to the plasma membrane and thereby regulates the structure and function of specific domains of the cell cortex. Tethers actin filaments by oscillating between a resting and an activated state providing transient interactions between moesin and the actin cytoskeleton. Once phosphorylated on its C-terminal threonine, moesin is activated leading to interaction with F-actin and cytoskeletal rearrangement. These rearrangements regulate many cellular processes, including cell shape determination, membrane transport, and signal transduction. The role of moesin is particularly important in immunity acting on both T and B-cells homeostasis and self-tolerance, regulating lymphocyte egress from lymphoid organs. Modulates phagolysosomal biogenesis in macrophages. Also participates in immunologic synapse formation. The polypeptide is Moesin (Mus musculus (Mouse)).